The chain runs to 329 residues: MAKLQAITLSGIGKNGDVTLNLNPRGVNPTNGVAALSEAGAVPALEKRVTISVSQPSRNRKNYKVQVKIQNPTSCTASGTCDPSVTRSAYADVTFSFTQYSTDEERALVRTELKALLADPMLIDAIDNLNPAYWTALLGDGSGPSPVPGPNPDPPLEPPPGTGSYTCPFRIWDLSSIYEAANSSHSWDIYNAVELSPRKFDVTLDDLLGNTDWRDWDGRLRYTTFRGSRGNGYIDLDATSLMQDEYLTSSKYLVREGKRPGAFGSIERFVYLKSINAYCSLSDITAYHSDGVVVGFWRDPSSGGAIPFDFSEFDSNKCPIQAVIVVPRL.

Residues 143–162 (GPSPVPGPNPDPPLEPPPGT) are disordered. The segment covering 145–161 (SPVPGPNPDPPLEPPPG) has biased composition (pro residues).

The protein localises to the virion. In terms of biological role, minor capsid protein. This Qbeta virus (strain MX1) protein is Minor capsid protein A1.